Here is a 242-residue protein sequence, read N- to C-terminus: ATP synthase subunit a, organellar chromatophore (242 aa).

The next 5 helical transmembrane spans lie at 28–48 (LHGQVFISSWVVISALLVLVI), 89–109 (LPFIGTLFLFIFGCNWGGALV), 128–148 (INTTVAMALLVSLSYFYAGLS), 193–213 (LVVGVLAFLVPILVPLPAMFL), and 214–234 (GLFTSAIQALIFATLAANYIG).

It belongs to the ATPase A chain family. As to quaternary structure, F-type ATPases have 2 components, CF(1) - the catalytic core - and CF(0) - the membrane proton channel. CF(1) has five subunits: alpha(3), beta(3), gamma(1), delta(1), epsilon(1). CF(0) has four main subunits: a, b, b' and c.

The protein localises to the plastid. The protein resides in the organellar chromatophore thylakoid membrane. Functionally, key component of the proton channel; it plays a direct role in the translocation of protons across the membrane. This is ATP synthase subunit a, organellar chromatophore from Paulinella chromatophora.